The sequence spans 287 residues: Elongation factor Ts (287 aa).

The involved in Mg(2+) ion dislocation from EF-Tu stretch occupies residues threonine 80 to leucine 83.

It belongs to the EF-Ts family.

It is found in the cytoplasm. Its function is as follows. Associates with the EF-Tu.GDP complex and induces the exchange of GDP to GTP. It remains bound to the aminoacyl-tRNA.EF-Tu.GTP complex up to the GTP hydrolysis stage on the ribosome. The sequence is that of Elongation factor Ts from Ectopseudomonas mendocina (strain ymp) (Pseudomonas mendocina).